Reading from the N-terminus, the 306-residue chain is MSGGLDVLQMKEEDVLKFLAAGTHLGGTNLDFQMEQYIYKRKSDGIYIINLKRTWEKLLLAARAIVAIENPADVCVISSRNTGQRAVLKFASASGATPIAGRFTPGTFTNQIQAAFREPRLLVVTDPRADHQPLTEASYVNIPTIALCNTDSPLRYVDIAIPCNNKGAHSVGLMWWMLAREVLRMRGTISREHPWEVMPDLYFYRDPEEIEKEEQAAAEKATTKEEYQGEWTAPVAEFPQAEVADWSEGVQVPSVPIQQFPAERPEIPAAKPAAEDWSSQPASTDDWSAAPTAQASEWTGTTTEWS.

S2 carries the post-translational modification N-acetylserine. Laminin-binding stretches follow at residues 161-180 and 205-229; these read IPCN…MLAR and RDPE…EYQG. 5 [DE]-W-[ST] repeats span residues 230–232, 245–247, 276–278, 286–288, and 304–306; these read EWT, DWS, and EWS. The interval 242–306 is laminin-binding; the sequence is EVADWSEGVQ…EWTGTTTEWS (65 aa). The interval 261–306 is disordered; it reads PAERPEIPAAKPAAEDWSSQPASTDDWSAAPTAQASEWTGTTTEWS. Residues 277 to 306 show a composition bias toward polar residues; sequence WSSQPASTDDWSAAPTAQASEWTGTTTEWS.

The protein belongs to the universal ribosomal protein uS2 family. As to quaternary structure, monomer (37LRP) and homodimer (67LR). Component of the small ribosomal subunit. Mature ribosomes consist of a small (40S) and a large (60S) subunit. The 40S subunit contains about 33 different proteins and 1 molecule of RNA (18S). The 60S subunit contains about 49 different proteins and 3 molecules of RNA (28S, 5.8S and 5S). Interacts with rps21. Interacts with several laminins including at least lamb1. Interacts with mdk. Post-translationally, acylated. Acylation may be a prerequisite for conversion of the monomeric 37 kDa laminin receptor precursor (37LRP) to the mature dimeric 67 kDa laminin receptor (67LR), and may provide a mechanism for membrane association. Cleaved by stromelysin-3 (ST3) at the cell surface. Cleavage by stromelysin-3 may be a mechanism to alter cell-extracellular matrix interactions.

The protein localises to the cell membrane. It localises to the cytoplasm. The protein resides in the nucleus. Its function is as follows. Required for the assembly and/or stability of the 40S ribosomal subunit. Required for the processing of the 20S rRNA-precursor to mature 18S rRNA in a late step of the maturation of 40S ribosomal subunits. Also functions as a cell surface receptor for laminin. Plays a role in cell adhesion to the basement membrane and in the consequent activation of signaling transduction pathways. May play a role in cell fate determination and tissue morphogenesis. The polypeptide is Small ribosomal subunit protein uS2 (rpsa) (Xenopus tropicalis (Western clawed frog)).